Consider the following 1034-residue polypeptide: Glycine dehydrogenase (decarboxylating), mitochondrial (1034 aa).

The transit peptide at 1-63 directs the protein to the mitochondrion; that stretch reads MERARRLAML…LNGFGSQVRT (63 aa). K770 carries the N6-(pyridoxal phosphate)lysine modification.

It belongs to the GcvP family. In terms of assembly, homodimer. The glycine cleavage system is composed of four proteins: P, T, L and H. Pyridoxal 5'-phosphate is required as a cofactor.

The protein localises to the mitochondrion. It carries out the reaction N(6)-[(R)-lipoyl]-L-lysyl-[glycine-cleavage complex H protein] + glycine + H(+) = N(6)-[(R)-S(8)-aminomethyldihydrolipoyl]-L-lysyl-[glycine-cleavage complex H protein] + CO2. The glycine cleavage system catalyzes the degradation of glycine. The P protein binds the alpha-amino group of glycine through its pyridoxal phosphate cofactor; CO(2) is released and the remaining methylamine moiety is then transferred to the lipoamide cofactor of the H protein. This chain is Glycine dehydrogenase (decarboxylating), mitochondrial (GDCSP), found in Flaveria anomala (Yellowtops).